A 346-amino-acid chain; its full sequence is N(4)-(beta-N-acetylglucosaminyl)-L-asparaginase (346 aa).

Positions Met-1 to Cys-23 are cleaved as a signal peptide. At Ser-24 the chain carries Blocked amino end (Ser). N-linked (GlcNAc...) asparagine glycosylation is present at Asn-38. Disulfide bonds link Cys-64–Cys-69 and Cys-163–Cys-179. Thr-206 acts as the Nucleophile in catalysis. Residues Arg-234–Asp-237 and Thr-257–Gly-260 contribute to the substrate site. An intrachain disulfide couples Cys-286 to Cys-306. An N-linked (GlcNAc...) asparagine glycan is attached at Asn-308. Cysteines 317 and 345 form a disulfide.

Belongs to the Ntn-hydrolase family. In terms of assembly, heterotetramer of two alpha and two beta chains arranged as a dimer of alpha/beta heterodimers. In terms of processing, cleaved into an alpha and beta chain by autocatalysis; this activates the enzyme. The N-terminal residue of the beta subunit is responsible for the nucleophile hydrolase activity. Post-translationally, N-glycosylated.

The protein localises to the lysosome. The catalysed reaction is N(4)-(beta-N-acetyl-D-glucosaminyl)-L-asparagine + H2O = N-acetyl-beta-D-glucosaminylamine + L-aspartate + H(+). In terms of biological role, cleaves the GlcNAc-Asn bond which joins oligosaccharides to the peptide of asparagine-linked glycoproteins. The protein is N(4)-(beta-N-acetylglucosaminyl)-L-asparaginase (AGA) of Homo sapiens (Human).